A 258-amino-acid polypeptide reads, in one-letter code: UPF0246 protein VS_0505 (258 aa).

This sequence belongs to the UPF0246 family.

This Vibrio atlanticus (strain LGP32) (Vibrio splendidus (strain Mel32)) protein is UPF0246 protein VS_0505.